Reading from the N-terminus, the 92-residue chain is Probable Fe(2+)-trafficking protein (92 aa).

Belongs to the Fe(2+)-trafficking protein family.

In terms of biological role, could be a mediator in iron transactions between iron acquisition and iron-requiring processes, such as synthesis and/or repair of Fe-S clusters in biosynthetic enzymes. In Shewanella sp. (strain ANA-3), this protein is Probable Fe(2+)-trafficking protein.